The primary structure comprises 473 residues: Cholesterol 22-monohydroxylase CYP90B52 (473 aa).

The helical transmembrane segment at 2–22 (EGLLLLLPTAIIALYLYISLI) threads the bilayer. Heme is bound at residue cysteine 422.

This sequence belongs to the cytochrome P450 family. Mainly expressed in leaves and roots and, at low levels, in fruits and stems.

The protein localises to the membrane. The catalysed reaction is cholesterol + reduced [NADPH--hemoprotein reductase] + O2 = (22S)-22-hydroxycholesterol + oxidized [NADPH--hemoprotein reductase] + H2O + H(+). Its pathway is steroid metabolism; cholesterol metabolism. Its function is as follows. Canonical brassinosteroid (BR)-biosynthetic enzyme capable of converting cholesterol to 22S-hydroxycholesterol via sterol-C22 hydroxylation. The protein is Cholesterol 22-monohydroxylase CYP90B52 of Paris polyphylla (Daiswa polyphylla).